Here is a 1420-residue protein sequence, read N- to C-terminus: DNA-directed RNA polymerase subunit beta' (1420 aa).

Residues cysteine 70, cysteine 72, cysteine 85, and cysteine 88 each coordinate Zn(2+). Mg(2+) is bound by residues aspartate 464, aspartate 466, and aspartate 468. 4 residues coordinate Zn(2+): cysteine 823, cysteine 897, cysteine 904, and cysteine 907.

This sequence belongs to the RNA polymerase beta' chain family. In terms of assembly, the RNAP catalytic core consists of 2 alpha, 1 beta, 1 beta' and 1 omega subunit. When a sigma factor is associated with the core the holoenzyme is formed, which can initiate transcription. It depends on Mg(2+) as a cofactor. Requires Zn(2+) as cofactor.

It carries out the reaction RNA(n) + a ribonucleoside 5'-triphosphate = RNA(n+1) + diphosphate. Its function is as follows. DNA-dependent RNA polymerase catalyzes the transcription of DNA into RNA using the four ribonucleoside triphosphates as substrates. This is DNA-directed RNA polymerase subunit beta' from Polynucleobacter asymbioticus (strain DSM 18221 / CIP 109841 / QLW-P1DMWA-1) (Polynucleobacter necessarius subsp. asymbioticus).